A 129-amino-acid chain; its full sequence is Large ribosomal subunit protein bL12 (129 aa).

It belongs to the bacterial ribosomal protein bL12 family. As to quaternary structure, homodimer. Part of the ribosomal stalk of the 50S ribosomal subunit. Forms a multimeric L10(L12)X complex, where L10 forms an elongated spine to which 2 to 4 L12 dimers bind in a sequential fashion. Binds GTP-bound translation factors.

In terms of biological role, forms part of the ribosomal stalk which helps the ribosome interact with GTP-bound translation factors. Is thus essential for accurate translation. The polypeptide is Large ribosomal subunit protein bL12 (Synechococcus sp. (strain CC9605)).